Consider the following 266-residue polypeptide: Ciliary microtubule inner protein 4 (266 aa).

Polar residues-rich tracts occupy residues 1 to 15 (MELSHRQGTTTLTRT) and 24 to 38 (QDMNSFRANHSSLDN). The interval 1-124 (MELSHRQGTT…SPEQRTVPLS (124 aa)) is disordered. A compositionally biased stretch (low complexity) spans 47-63 (LSQSPLGSSLGQGYLET). The span at 81–102 (HPEDLKKGASRSSSRDARETFR) shows a compositional bias: basic and acidic residues.

As to expression, only detected in testis, in the spermatids and sperm within the seminiferous tubules (at protein level).

It localises to the cytoplasmic vesicle. Its subcellular location is the secretory vesicle. The protein resides in the acrosome. The protein localises to the cell projection. It is found in the cilium. It localises to the flagellum. Its function is as follows. Seems to be associated with spermiogenesis but is not essential for sperm development and male fertility. The protein is Ciliary microtubule inner protein 4 (Cimip4) of Mus musculus (Mouse).